Reading from the N-terminus, the 141-residue chain is HTH-type transcriptional repressor NsrR (141 aa).

The 128-residue stretch at 2–129 (QLTSFTDYGL…DNYTLADLVE (128 aa)) folds into the HTH rrf2-type domain. Residues 28–51 (ISEVTDVYGVSRNHMVKIINQLSR) constitute a DNA-binding region (H-T-H motif). Residues cysteine 91, cysteine 96, and cysteine 102 each coordinate [2Fe-2S] cluster.

The cofactor is [2Fe-2S] cluster.

Its function is as follows. Nitric oxide-sensitive repressor of genes involved in protecting the cell against nitrosative stress. May require iron for activity. The polypeptide is HTH-type transcriptional repressor NsrR (Escherichia coli O127:H6 (strain E2348/69 / EPEC)).